The following is a 65-amino-acid chain: Adrenergic toxin rho-elapitoxin-Dp1a (65 aa).

Intrachain disulfides connect Cys3–Cys24, Cys17–Cys42, Cys46–Cys57, and Cys58–Cys63.

It belongs to the three-finger toxin family. Short-chain subfamily. Aminergic toxin sub-subfamily. In terms of tissue distribution, expressed by the venom gland.

It localises to the secreted. This toxin shows activities on different G-protein coupled receptors. It is highly potent on various alpha-adrenoceptors (ADRA) (subnanomolar affinity for ADRA1A). Order of potency is the following: ADRA1A &gt; ADRA1B &gt; ADRA1D &gt; ADRA2C. It is also found to reversibly bind to muscarinic acetylcholine receptors (CHRM), but the affinity is much weaker (CHRM1 and CHRM2, Ki&gt;1 uM; CHRM3, Ki=140 nM; CHRM4, Ki=120 nM; CHRM5, Ki=350 nM). This is Adrenergic toxin rho-elapitoxin-Dp1a from Dendroaspis polylepis polylepis (Black mamba).